Here is a 210-residue protein sequence, read N- to C-terminus: HTH-type transcriptional regulator MtrR (210 aa).

The region spanning 9–69 (LKTKEHLMLA…ALFQRICDDI (61 aa)) is the HTH tetR-type domain. Positions 32–51 (SLNEIAQAAGVTRGALYWHF) form a DNA-binding region, H-T-H motif.

As to quaternary structure, homodimer. Binds to DNA as a pair of dimers.

With respect to regulation, DNA binding is affected significantly by increasing the NaCl concentration. Controls the permeability of the cell envelope to hydrophobic compounds such as antibiotics and detergents. Represses transcription of the mtrCDE-encoded efflux pump by binding within the mtrCDE promoter. Also negatively regulates the expression of farR, by binding to its promoter region, leading indirectly to the positive regulation of expression of the farAB-encoded efflux pump. The sequence is that of HTH-type transcriptional regulator MtrR from Neisseria gonorrhoeae.